Here is a 755-residue protein sequence, read N- to C-terminus: Zinc transporter ZIP6 (755 aa).

The signal sequence occupies residues 1-28; sequence MARKLSVILILTFALSVTNPLHELKAAA. Over 29 to 325 the chain is Extracellular; sequence FPQTTEKISP…PKTYSLQIAW (297 aa). N67 carries N-linked (GlcNAc...) asparagine glycosylation. Over residues 95 to 128 the composition is skewed to basic and acidic residues; that stretch reads DHDHHSDHEHHSDHERHSDHEHHSEHEHHSDHDH. Disordered stretches follow at residues 95 to 186 and 202 to 246; these read DHDH…SASE and LETI…SVSE. Over residues 129-144 the composition is skewed to basic residues; sequence HSHHNHAASGKNKRKA. Basic and acidic residues-rich tracts occupy residues 145–159 and 167–179; these read LCPD…KDPR and HRPE…RNVK. Low complexity predominate over residues 219-234; sequence SSSTPPSVTSKSRVSR. N-linked (GlcNAc...) asparagine glycosylation is found at N241, N266, and N283. Residues 326-346 traverse the membrane as a helical segment; sequence VGGFIAISIISFLSLLGVILV. The Cytoplasmic segment spans residues 347-355; it reads PLMNRVFFK. Residues 356–376 traverse the membrane as a helical segment; sequence FLLSFLVALAVGTLSGDAFLH. Over 377–423 the chain is Extracellular; the sequence is LLPHSHASHHHSHSHEEPAMEMKRGPLFSHLSSQNIEESAYFDSTWK. The helical transmembrane segment at 424–444 threads the bilayer; sequence GLTALGGLYFMFLVEHVLTLI. At 445–657 the chain is on the cytoplasmic side; it reads KQFKDKKKKN…LKAGMTVKQA (213 aa). The stretch at 464-480 forms a coiled coil; sequence VEIKKQLSKYESQLSTN. S471 and S478 each carry phosphoserine. A helical transmembrane segment spans residues 658–678; that stretch reads VLYNALSAMLAYLGMATGIFI. Topologically, residues 679-686 are extracellular; sequence GHYAENVS. A glycan (N-linked (GlcNAc...) asparagine) is linked at N684. A helical membrane pass occupies residues 687–707; it reads MWIFALTAGLFMYVALVDMVP. The Cytoplasmic segment spans residues 708–724; it reads EMLHNDASDHGCSRWGY. The chain crosses the membrane as a helical span at residues 725–745; it reads FFLQNAGMLLGFGIMLLISIF. Over 746-755 the chain is Extracellular; it reads EHKIVFRINF.

This sequence belongs to the ZIP transporter (TC 2.A.5) family. Interacts with SLC39A10; which triggers cells to undergo EMT and mitosis. Found in a complex with SLC39A6, SLC39A10 and with the 'Ser-727' phosphorylated form of STAT3 throughout mitosis. Found in a complex with SLC39A6, SLC39A10 and with NCAM1; this complex controls NCAM1 phosphorylation and integration into focal adhesion complexes during epithelial-to-mesenchymal transition (EMT). Found in a complex with SLC39A6, SLC39A10 and with GSK3B that controls NCAM1 phosphorylation. Cleaved on the N-terminus before locating to the plasma membrane. Post-translationally, N-glycosylated. In terms of processing, phosphorylated by ZAP70 in response to TCR stimulation leading to its activation. As to expression, highly expressed in the breast, prostate, placenta, kidney, pituitary and corpus callosum. Weakly expressed in heart and intestine. Also highly expressed in cells derived from an adenocarcinoma of the cervix and lung carcinoma.

The protein localises to the cell membrane. Its subcellular location is the cell projection. It is found in the lamellipodium membrane. It localises to the membrane raft. The protein resides in the apical cell membrane. The catalysed reaction is Zn(2+)(in) = Zn(2+)(out). Zinc-influx transporter which plays a role in zinc homeostasis and in the induction of epithelial-to-mesenchymal transition (EMT). When associated with SLC39A10, the heterodimer formed by SLC39A10 and SLC39A6 mediates cellular zinc uptake to trigger cells to undergo epithelial- to-mesenchymal transition (EMT). The SLC39A10-SLC39A6 heterodimer also controls NCAM1 phosphorylation and its integration into focal adhesion complexes during EMT. Zinc influx inactivates GSK3B, enabling unphosphorylated SNAI1 in the nucleus to down-regulate adherence genes such as CDH1, causing loss of cell adherence. In addition, the SLC39A10-SLC39A6 heterodimer plays an essentiel role in initiating mitosis by importing zinc into cells to initiate a pathway resulting in the onset of mitosis. Participates in the T-cell receptor signaling regulation by mediating cellular zinc uptake into activated lymphocytes. Regulates the zinc influx necessary for proper meiotic progression to metaphase II (MII) that allows the oocyte-to-egg transition. The protein is Zinc transporter ZIP6 of Homo sapiens (Human).